Here is a 434-residue protein sequence, read N- to C-terminus: Methylenetetrahydrofolate--tRNA-(uracil-5-)-methyltransferase TrmFO (434 aa).

9–14 (GAGLAG) contributes to the FAD binding site.

This sequence belongs to the MnmG family. TrmFO subfamily. The cofactor is FAD.

The protein localises to the cytoplasm. It carries out the reaction uridine(54) in tRNA + (6R)-5,10-methylene-5,6,7,8-tetrahydrofolate + NADH + H(+) = 5-methyluridine(54) in tRNA + (6S)-5,6,7,8-tetrahydrofolate + NAD(+). The enzyme catalyses uridine(54) in tRNA + (6R)-5,10-methylene-5,6,7,8-tetrahydrofolate + NADPH + H(+) = 5-methyluridine(54) in tRNA + (6S)-5,6,7,8-tetrahydrofolate + NADP(+). In terms of biological role, catalyzes the folate-dependent formation of 5-methyl-uridine at position 54 (M-5-U54) in all tRNAs. In Bacillus pumilus (strain SAFR-032), this protein is Methylenetetrahydrofolate--tRNA-(uracil-5-)-methyltransferase TrmFO.